A 78-amino-acid polypeptide reads, in one-letter code: Acyl carrier protein (78 aa).

The region spanning 2 to 77 is the Carrier domain; it reads SDTAERVKKI…DAVKYIEKAT (76 aa). An O-(pantetheine 4'-phosphoryl)serine modification is found at Ser-37.

This sequence belongs to the acyl carrier protein (ACP) family. Post-translationally, 4'-phosphopantetheine is transferred from CoA to a specific serine of apo-ACP by AcpS. This modification is essential for activity because fatty acids are bound in thioester linkage to the sulfhydryl of the prosthetic group.

The protein localises to the cytoplasm. The protein operates within lipid metabolism; fatty acid biosynthesis. Its function is as follows. Carrier of the growing fatty acid chain in fatty acid biosynthesis. The protein is Acyl carrier protein of Chelativorans sp. (strain BNC1).